The sequence spans 449 residues: Tubulin alpha-2 chain (449 aa).

Gln11 contacts GTP. Lys40 carries the post-translational modification N6-acetyllysine. Glu71, Ser140, Gly144, Thr145, Thr179, Asn206, and Asn228 together coordinate GTP. Glu71 is a binding site for Mg(2+). Glu254 is an active-site residue.

The protein belongs to the tubulin family. Dimer of alpha and beta chains. A typical microtubule is a hollow water-filled tube with an outer diameter of 25 nm and an inner diameter of 15 nM. Alpha-beta heterodimers associate head-to-tail to form protofilaments running lengthwise along the microtubule wall with the beta-tubulin subunit facing the microtubule plus end conferring a structural polarity. Microtubules usually have 13 protofilaments but different protofilament numbers can be found in some organisms and specialized cells. Requires Mg(2+) as cofactor. Undergoes a tyrosination/detyrosination cycle, the cyclic removal and re-addition of a C-terminal tyrosine residue by the enzymes tubulin tyrosine carboxypeptidase (TTCP) and tubulin tyrosine ligase (TTL), respectively. In terms of processing, acetylation of alpha chains at Lys-40 stabilizes microtubules and affects affinity and processivity of microtubule motors. This modification has a role in multiple cellular functions, ranging from cell motility, cell cycle progression or cell differentiation to intracellular trafficking and signaling. During the early stages of oogenesis lky/Alpha-tubulin N-acetyltransferase 2 is the main acetyltransferase responsible for Lys-40 acetylation in germline cells while Atat/alpha-tubulin N-acetyltransferase 1 is the main acetyltransferase responsible for Lys-40 acetylation in somatic cells.

It is found in the cytoplasm. It localises to the cytoskeleton. It carries out the reaction GTP + H2O = GDP + phosphate + H(+). Its function is as follows. Tubulin is the major constituent of microtubules, a cylinder consisting of laterally associated linear protofilaments composed of alpha- and beta-tubulin heterodimers. Microtubules grow by the addition of GTP-tubulin dimers to the microtubule end, where a stabilizing cap forms. Below the cap, tubulin dimers are in GDP-bound state, owing to GTPase activity of alpha-tubulin. This is Tubulin alpha-2 chain (alphaTub85E) from Drosophila melanogaster (Fruit fly).